Consider the following 202-residue polypeptide: MTGDFAFVDELVSGIRWDAKYATWDNFTGKPVDGYLANRIVGTKALCAALGRAQERAEDLGFGLLLWDGYRPQRAVDCFLRWSQQPEDGRTKARHYPNIGRAEMFDRGYVAARSGHSRGATVDLTLYHLTTGELAAMGGGHDLMDPISHHDARDVPRAEAANRRHLRSIMAACGFASYACEWWHYTLKEEPHPDTYFDFPIA.

Zn(2+)-binding residues include histidine 116 and aspartate 123. Glutamate 181 (proton donor/acceptor) is an active-site residue. Histidine 184 is a binding site for Zn(2+).

This sequence belongs to the peptidase M15D family. The cofactor is Zn(2+).

The catalysed reaction is D-alanyl-D-alanine + H2O = 2 D-alanine. In terms of biological role, catalyzes hydrolysis of the D-alanyl-D-alanine dipeptide. May play a role in immunity or defense against glycopeptide antibiotics (perhaps at a moderate level) in the soil environment. Might confer vancomycin resistance to S.coelicolor. The protein is D-alanyl-D-alanine dipeptidase (vanX) of Streptomyces coelicolor (strain ATCC BAA-471 / A3(2) / M145).